The following is a 412-amino-acid chain: Nucleoside transporter 1 (412 aa).

The disordered stretch occupies residues Met-1 to Glu-21. Over Met-1–Ser-29 the chain is Cytoplasmic. A compositionally biased stretch (polar residues) spans Ser-7 to Glu-21. The helical transmembrane segment at Ile-30–Ala-50 threads the bilayer. At Leu-51–Lys-56 the chain is on the extracellular side. Residues Ile-57–Val-77 traverse the membrane as a helical segment. Topologically, residues Asn-78 to Arg-81 are cytoplasmic. The chain crosses the membrane as a helical span at residues Val-82–His-102. The Extracellular portion of the chain corresponds to Gln-103–Cys-114. The chain crosses the membrane as a helical span at residues Leu-115 to Ile-135. Residues Gly-136 to Ser-144 are Cytoplasmic-facing. A helical membrane pass occupies residues Gly-145 to Leu-165. At Asp-166 to Lys-181 the chain is on the extracellular side. The helical transmembrane segment at Leu-182–Leu-202 threads the bilayer. Topologically, residues Tyr-203 to Lys-240 are cytoplasmic. The helical transmembrane segment at Ala-241–His-261 threads the bilayer. Topologically, residues Lys-262–Thr-271 are extracellular. A helical transmembrane segment spans residues Asp-272–Asn-294. Over Phe-295–Thr-310 the chain is Cytoplasmic. A helical transmembrane segment spans residues Leu-311–Ile-331. The Extracellular portion of the chain corresponds to Ser-332–Cys-343. The chain crosses the membrane as a helical span at residues Val-344–Phe-364. At Val-365–Arg-382 the chain is on the cytoplasmic side. A helical membrane pass occupies residues Ile-383–Asp-403. The Extracellular portion of the chain corresponds to Tyr-404–Asn-412.

This sequence belongs to the SLC29A/ENT transporter (TC 2.A.57) family.

The protein resides in the cell membrane. It catalyses the reaction inosine(in) = inosine(out). It carries out the reaction adenosine(in) = adenosine(out). The enzyme catalyses hypoxanthine(out) = hypoxanthine(in). The catalysed reaction is guanosine(in) = guanosine(out). It catalyses the reaction guanine(out) = guanine(in). It carries out the reaction thymidine(in) = thymidine(out). The enzyme catalyses uridine(out) = uridine(in). The catalysed reaction is uracil(in) = uracil(out). It catalyses the reaction thymine(out) = thymine(in). It carries out the reaction adenine(out) = adenine(in). The enzyme catalyses cytosine(out) = cytosine(in). The catalysed reaction is xanthine(out) = xanthine(in). Its function is as follows. Nucleoside and nucleobase transporter with a broad substrate specificity. This chain is Nucleoside transporter 1, found in Plasmodium berghei (strain Anka).